The sequence spans 445 residues: Cyclic GMP-AMP phosphodiesterase SMPDL3A (445 aa).

The signal sequence occupies residues 1-22; that stretch reads MALLGNFLCCLLVAWLCGPGLG. D42 and H44 together coordinate Zn(2+). C59 and C78 are joined by a disulfide. N66 carries N-linked (GlcNAc...) asparagine glycosylation. D107 is a binding site for Zn(2+). H111 serves as a coordination point for ATP. N128 carries N-linked (GlcNAc...) asparagine glycosylation. A Zn(2+)-binding site is contributed by N148. 2 residues coordinate ATP: N148 and H149. N-linked (GlcNAc...) asparagine glycosylation is found at N219 and N235. H249 provides a ligand contact to Zn(2+). Y257 contributes to the ATP binding site. Zn(2+) is bound by residues H290 and H292. 2 N-linked (GlcNAc...) asparagine glycosylation sites follow: N353 and N364. Intrachain disulfides connect C417–C421 and C427–C440.

It belongs to the acid sphingomyelinase family. As to quaternary structure, monomer. Homodimer; homodimerizes following 2',3'-cGAMP-binding. It depends on Zn(2+) as a cofactor. N-glycosylated. Detected in blood serum (at protein level).

The protein localises to the secreted. The enzyme catalyses 2',3'-cGAMP + H2O = 5'-pGpA(2'-5') + H(+). It carries out the reaction 5'-pGpA(2'-5') + H2O = 5'-GpA(2'-5') + phosphate. It catalyses the reaction a ribonucleoside 5'-triphosphate + H2O = a ribonucleoside 5'-diphosphate + phosphate + H(+). The catalysed reaction is ATP + H2O = ADP + phosphate + H(+). Requires micromolar levels of Zn(2+) for activity. Inhibited by millimolar levels of Zn(2+). Cyclic-nucleotide phosphodiesterase that acts as a negative regulator of innate immunity by mediating degradation of 2',3'-cGAMP, thereby inhibiting the cGAS-STING signaling. Specifically linearizes 2',3'-cGAMP into 2'5'-bond pGpA and further hydrolyzes pGpA to produce GpA. Also has in vitro nucleotide phosphodiesterase activity with nucleoside triphosphates, such as ATP. Has in vitro activity with p-nitrophenyl-TMP. Has lower activity with nucleoside diphosphates, and no activity with nucleoside monophosphates. Has in vitro activity with CDP-choline, giving rise to CMP and phosphocholine. Has in vitro activity with CDP-ethanolamine. Does not have sphingomyelin phosphodiesterase activity. This chain is Cyclic GMP-AMP phosphodiesterase SMPDL3A, found in Mus musculus (Mouse).